A 704-amino-acid polypeptide reads, in one-letter code: 1,4-alpha-glucan-branching enzyme (704 aa).

Residues Trp-94 and Lys-131 each contribute to the (1,4-alpha-D-glucosyl)n site. Phosphoserine is present on Ser-190. Asp-356 functions as the Nucleophile in the catalytic mechanism. Glu-417 acts as the Proton donor in catalysis.

Belongs to the glycosyl hydrolase 13 family. GlgB subfamily.

It localises to the cytoplasm. It carries out the reaction Transfers a segment of a (1-&gt;4)-alpha-D-glucan chain to a primary hydroxy group in a similar glucan chain.. The protein operates within glycan biosynthesis; glycogen biosynthesis. Its function is as follows. Glycogen-branching enzyme participates in the glycogen biosynthetic process along with glycogenin and glycogen synthase. Generates alpha-1,6-glucosidic branches from alpha-1,4-linked glucose chains, to increase solubility of the glycogen polymer. In Saccharomyces cerevisiae (strain ATCC 204508 / S288c) (Baker's yeast), this protein is 1,4-alpha-glucan-branching enzyme (GLC3).